Reading from the N-terminus, the 1416-residue chain is Tiny macrocysts protein B (1416 aa).

A run of 8 helical transmembrane segments spans residues 47–67, 93–113, 140–160, 185–205, 231–251, 253–273, 285–305, and 315–335; these read ILTI…GFKH, FGYL…ILGF, FVSF…LIGL, ANLP…IVAF, VTVL…DFVP, LTSI…IIVL, SGFY…MGIN, and ITIV…MFYF. The span at 356-372 shows a compositional bias: basic and acidic residues; the sequence is LKDANKKGKRNSVEKES. Disordered stretches follow at residues 356 to 377 and 662 to 691; these read LKDA…PTSK and IEKS…RRGK. Helical transmembrane passes span 706–726 and 953–973; these read WLMI…LVVF and AILY…AVLF. Disordered stretches follow at residues 1018 to 1103 and 1119 to 1144; these read RDNL…RPLM and NVRL…ATRT. A compositionally biased stretch (acidic residues) spans 1024–1039; the sequence is TTDDDGRDDHLGEDDN. 2 stretches are compositionally biased toward low complexity: residues 1048 to 1062 and 1083 to 1094; these read NNNN…NNNN and SSSGSNVLNTSS. Residues 1123–1144 are compositionally biased toward basic and acidic residues; the sequence is QAKDEEITNGGGERKGSDATRT. 3 consecutive transmembrane segments (helical) span residues 1179 to 1199, 1325 to 1345, and 1358 to 1378; these read ILAT…TFTV, WFLA…FTYF, and VLTA…VVLF.

The protein localises to the membrane. In terms of biological role, regulator of the cAMP signaling pathway specific to sexual development. Controls the levels of external cAMP by regulating the expression of phosphodiesterase pdsA and its inhibitor pdiA. The polypeptide is Tiny macrocysts protein B (tmcB) (Dictyostelium discoideum (Social amoeba)).